A 77-amino-acid polypeptide reads, in one-letter code: Acyl carrier protein (77 aa).

The region spanning alanine 2–glutamine 77 is the Carrier domain. Position 37 is an O-(pantetheine 4'-phosphoryl)serine (serine 37).

It belongs to the acyl carrier protein (ACP) family. In terms of processing, 4'-phosphopantetheine is transferred from CoA to a specific serine of apo-ACP by AcpS. This modification is essential for activity because fatty acids are bound in thioester linkage to the sulfhydryl of the prosthetic group.

It localises to the cytoplasm. Its pathway is lipid metabolism; fatty acid biosynthesis. In terms of biological role, carrier of the growing fatty acid chain in fatty acid biosynthesis. The protein is Acyl carrier protein (acpA) of Bacillus subtilis (strain 168).